The chain runs to 181 residues: 6,7-dimethyl-8-ribityllumazine synthase 2 (181 aa).

The interval 1–23 (MSLPMTETVTDPAETAPPTAERS) is disordered. 5-amino-6-(D-ribitylamino)uracil contacts are provided by residues W40, 74–76 (SFE), 98–100 (LVV), and S129.

This sequence belongs to the DMRL synthase family.

It carries out the reaction (2S)-2-hydroxy-3-oxobutyl phosphate + 5-amino-6-(D-ribitylamino)uracil = 6,7-dimethyl-8-(1-D-ribityl)lumazine + phosphate + 2 H2O + H(+). The protein operates within cofactor biosynthesis; riboflavin biosynthesis; riboflavin from 2-hydroxy-3-oxobutyl phosphate and 5-amino-6-(D-ribitylamino)uracil: step 1/2. Its function is as follows. Catalyzes the formation of 6,7-dimethyl-8-ribityllumazine by condensation of 5-amino-6-(D-ribitylamino)uracil with 3,4-dihydroxy-2-butanone 4-phosphate. This is the penultimate step in the biosynthesis of riboflavin. The sequence is that of 6,7-dimethyl-8-ribityllumazine synthase 2 from Rhodopseudomonas palustris (strain ATCC BAA-98 / CGA009).